We begin with the raw amino-acid sequence, 211 residues long: Large ribosomal subunit protein bL25 (211 aa).

The tract at residues 185-211 is disordered; the sequence is ESTTPAATEGEETEAAAAAPEPAAEDK. A compositionally biased stretch (low complexity) spans 199-211; sequence AAAAAPEPAAEDK.

Belongs to the bacterial ribosomal protein bL25 family. CTC subfamily. Part of the 50S ribosomal subunit; part of the 5S rRNA/L5/L18/L25 subcomplex. Contacts the 5S rRNA. Binds to the 5S rRNA independently of L5 and L18.

This is one of the proteins that binds to the 5S RNA in the ribosome where it forms part of the central protuberance. This chain is Large ribosomal subunit protein bL25, found in Treponema denticola (strain ATCC 35405 / DSM 14222 / CIP 103919 / JCM 8153 / KCTC 15104).